The sequence spans 1236 residues: MEEKSSKKNDGGNQKVSFFKLFSFADKTDVVLMTVGTIAAAGNGLTQPFMTLIFGQLINAFGTTDPDHMVREVWKVAVKFIYLAVYSCVVAFLQVSCWMVTGERQSATIRGLYLKTILRQDIGYFDTETNTGEVIGRMSGDTILIQDAMGEKVGKFTQLLCTFLGGFAIAFYKGPLLAGVLCSCIPLIVIAGAAMSLIMSKMAGRGQVAYAEAGNVVEQTVGAIRTVVAFTGEKQATEKYESKLEIAYKTVVQQGLISGFGLGTMLAVIFCSYGLAVWYGAKLIMEKGYNGGQVINVIFAVLTGGMSLGQTSPSLNAFAAGRAAAFKMFETIKRSPKIDAYDMSGSVLEDIRGDIELKDVYFRYPARPDVQIFAGFSLFVPNGKTVALVGQSGSGKSTVISLIERFYDPESGQVLIDNIDLKKLQLKWIRSKIGLVSQEPVLFATTIKENIAYGKEDATDQEIRTAIELANAAKFIDKLPQGLDTMVGEHGTQMSGGQKQRLAIARAILKNPKILLLDEATSALDAESERIVQDALVNLMSNRTTVVVAHRLTTIRTADVIAVVHQGKIVEKGTHDEMIQDPEGAYSQLVRLQEGSKEEATESERPETSLDVERSGSLRLSSAMRRSVSRNSSSSRHSFSLASNMFFPGVNVNQTDEMEDEENNVRHKKVSLKRLAHLNKPEIPVLVLGSIAAMVHGTVFPIFGLLLSSSINMFYEPAKILKKDSHFWALIYIALGLTNFVMIPVQNYFFGIAGGKLIKRIRSMCFDKVVHQEISWFDDTANSRSLVGDALALIVQNIATVTTGLIIAFTANWILALIVLALSPFIVIQGYAQTKFLTGFSADAKAMYEEASQVANDAVSSIRTVASFCAEEKVMDLYQQKCDGPKKNGVRLGLLSGAGFGFSFFFLYCINCVCFVSGAGLIQIGKATFGEVFKVFFALTIMAIGVSQTSAMAPDSNKAKDSAASIFDILDSTPKIDSSSDEGTTLQNVNGDIEFRHVSFRYPMRPDVQIFRDLCLTIPSGKTVALVGESGSGKSTVISMIERFYNPDSGKILIDQVEIQTFKLSWLRQQMGLVSQEPILFNETIRSNIAYGKTGGATEEEIIAAAKAANAHNFISSLPQGYDTSVGERGVQLSGGQKQRIAIARAILKDPKILLLDEATSALDAESERVVQDALDRVMVNRTTVVVAHRLTTIKNADVIAVVKNGVIAEKGRHETLMKISGGAYASLVTLHMSAN.

Positions 33-320 constitute an ABC transmembrane type-1 1 domain; it reads MTVGTIAAAG…TSPSLNAFAA (288 aa). The next 6 membrane-spanning stretches (helical) occupy residues 38–58, 80–100, 158–178, 179–199, 257–277, and 288–308; these read IAAA…GQLI, FIYL…CWMV, QLLC…PLLA, GVLC…SLIM, ISGF…GLAV, and GYNG…GMSL. One can recognise an ABC transporter 1 domain in the interval 355–591; sequence IELKDVYFRY…PEGAYSQLVR (237 aa). 390 to 397 provides a ligand contact to ATP; the sequence is GQSGSGKS. N-linked (GlcNAc...) asparagine glycosylation occurs at asparagine 542. The interval 593 to 616 is disordered; the sequence is QEGSKEEATESERPETSLDVERSG. Basic and acidic residues predominate over residues 594–616; sequence EGSKEEATESERPETSLDVERSG. 2 N-linked (GlcNAc...) asparagine glycosylation sites follow: asparagine 631 and asparagine 653. Helical transmembrane passes span 685 to 705, 725 to 745, 785 to 805, 806 to 826, 902 to 922, and 927 to 947; these read VLVL…IFGL, SHFW…MIPV, SLVG…TTGL, IIAF…SPFI, FSFF…AGLI, and ATFG…IGVS. One can recognise an ABC transmembrane type-1 2 domain in the interval 686 to 958; the sequence is LVLGSIAAMV…TSAMAPDSNK (273 aa). Positions 993 to 1230 constitute an ABC transporter 2 domain; the sequence is IEFRHVSFRY…SGGAYASLVT (238 aa). 1028-1035 is an ATP binding site; sequence GESGSGKS. Asparagine 1082 and asparagine 1181 each carry an N-linked (GlcNAc...) asparagine glycan.

The protein belongs to the ABC transporter superfamily. ABCB family. Multidrug resistance exporter (TC 3.A.1.201) subfamily.

The protein resides in the membrane. The polypeptide is ABC transporter B family member 9 (ABCB9) (Arabidopsis thaliana (Mouse-ear cress)).